Reading from the N-terminus, the 323-residue chain is Cysteine synthase A (323 aa).

Asn-8 and Arg-35 together coordinate hydrogen sulfide. Lys-42 carries the N6-(pyridoxal phosphate)lysine modification. Residues Asn-72 and 177-181 contribute to the pyridoxal 5'-phosphate site; that span reads GTGGT. Residue Leu-269 participates in hydrogen sulfide binding. Pyridoxal 5'-phosphate is bound at residue Ser-273.

This sequence belongs to the cysteine synthase/cystathionine beta-synthase family. As to quaternary structure, homodimer. The cofactor is pyridoxal 5'-phosphate.

It carries out the reaction O-acetyl-L-serine + hydrogen sulfide = L-cysteine + acetate. Its pathway is amino-acid biosynthesis; L-cysteine biosynthesis; L-cysteine from L-serine: step 2/2. This chain is Cysteine synthase A (cysK), found in Escherichia coli O157:H7.